Consider the following 278-residue polypeptide: 4-deoxy-L-threo-5-hexosulose-uronate ketol-isomerase (278 aa).

Zn(2+) is bound by residues H196, H198, E203, and H245.

It belongs to the KduI family. Requires Zn(2+) as cofactor.

It carries out the reaction 5-dehydro-4-deoxy-D-glucuronate = 3-deoxy-D-glycero-2,5-hexodiulosonate. It functions in the pathway glycan metabolism; pectin degradation; 2-dehydro-3-deoxy-D-gluconate from pectin: step 4/5. Catalyzes the isomerization of 5-dehydro-4-deoxy-D-glucuronate to 3-deoxy-D-glycero-2,5-hexodiulosonate. This chain is 4-deoxy-L-threo-5-hexosulose-uronate ketol-isomerase, found in Burkholderia cenocepacia (strain ATCC BAA-245 / DSM 16553 / LMG 16656 / NCTC 13227 / J2315 / CF5610) (Burkholderia cepacia (strain J2315)).